The following is a 356-amino-acid chain: Uroporphyrinogen decarboxylase (356 aa).

Substrate-binding positions include 27 to 31 (RQAGR), D77, Y154, T209, and H327.

It belongs to the uroporphyrinogen decarboxylase family. Homodimer.

The protein resides in the cytoplasm. The catalysed reaction is uroporphyrinogen III + 4 H(+) = coproporphyrinogen III + 4 CO2. It participates in porphyrin-containing compound metabolism; protoporphyrin-IX biosynthesis; coproporphyrinogen-III from 5-aminolevulinate: step 4/4. Catalyzes the decarboxylation of four acetate groups of uroporphyrinogen-III to yield coproporphyrinogen-III. The polypeptide is Uroporphyrinogen decarboxylase (Hahella chejuensis (strain KCTC 2396)).